The following is a 63-amino-acid chain: Large ribosomal subunit protein uL29 (63 aa).

It belongs to the universal ribosomal protein uL29 family.

This is Large ribosomal subunit protein uL29 from Caulobacter vibrioides (strain ATCC 19089 / CIP 103742 / CB 15) (Caulobacter crescentus).